A 602-amino-acid chain; its full sequence is Glutathione-regulated potassium-efflux system protein KefB (602 aa).

13 helical membrane passes run 4 to 24 (TGLL…VPIA), 29 to 49 (IGAV…GLGF), 55 to 75 (EILH…GLEL), 87 to 107 (IFGV…ALLY), 115 to 135 (AAVI…LQLM), 152 to 172 (VLLF…ILAG), 181 to 201 (VKIG…RYLL), 207 to 227 (YIVA…VVLG), 230 to 250 (LFMD…GILL), 261 to 281 (IAIE…VGMA), 296 to 318 (LGVL…VFGL), 326 to 346 (FAGV…AAFS), and 356 to 376 (ALLL…MQVI). The 120-residue stretch at 400-519 (DPQVIIVGFG…NGVKDFTRET (120 aa)) folds into the RCK N-terminal domain.

Belongs to the monovalent cation:proton antiporter 2 (CPA2) transporter (TC 2.A.37) family. KefB subfamily. In terms of assembly, interacts with the regulatory subunit KefG.

It localises to the cell inner membrane. Its function is as follows. Pore-forming subunit of a potassium efflux system that confers protection against electrophiles. Catalyzes K(+)/H(+) antiport. This is Glutathione-regulated potassium-efflux system protein KefB from Yersinia pestis bv. Antiqua (strain Antiqua).